A 542-amino-acid polypeptide reads, in one-letter code: GMP synthase [glutamine-hydrolyzing] (542 aa).

A Glutamine amidotransferase type-1 domain is found at 28–218 (MIVILDFGSQ…VYHICECEPT (191 aa)). Cys105 functions as the Nucleophile in the catalytic mechanism. Active-site residues include His192 and Glu194. In terms of domain architecture, GMPS ATP-PPase spans 219 to 417 (WTTEAFVDET…IGLPEEIVRR (199 aa)). Position 246–252 (246–252 (SGGVDSS)) interacts with ATP.

In terms of assembly, homodimer.

It carries out the reaction XMP + L-glutamine + ATP + H2O = GMP + L-glutamate + AMP + diphosphate + 2 H(+). It participates in purine metabolism; GMP biosynthesis; GMP from XMP (L-Gln route): step 1/1. Its function is as follows. Catalyzes the synthesis of GMP from XMP. In Crocosphaera subtropica (strain ATCC 51142 / BH68) (Cyanothece sp. (strain ATCC 51142)), this protein is GMP synthase [glutamine-hydrolyzing].